Here is a 1608-residue protein sequence, read N- to C-terminus: Protein REDUCED CHLOROPLAST COVERAGE 3 (1608 aa).

The segment covering 1–12 (MAPRSSKGKSNN) has biased composition (basic residues). 2 disordered regions span residues 1–22 (MAPR…KKKR) and 278–303 (VSES…GRNG). In terms of domain architecture, Clu spans 288–564 (EDEHWGGNGG…KKETDVCGKP (277 aa)). 4 TPR repeats span residues 848–881 (GRTL…MIAV), 890–923 (ACAY…NERE), 932–965 (MKSY…LHFT), and 974–1007 (AATY…NKRL). Disordered regions lie at residues 1194-1226 (VEES…RQPD), 1238-1292 (HNRN…ASGA), 1369-1400 (KQES…KTSD), 1466-1499 (TPRS…VSVD), and 1531-1552 (PAAL…KDSA). The Nuclear localization signal motif lies at 1217–1224 (GRKSRQRQ). 2 stretches are compositionally biased toward polar residues: residues 1242-1265 (QDVQ…LSKS) and 1373-1385 (QESA…LTSE). The segment covering 1535-1546 (SKTSPEAESGGT) has biased composition (polar residues).

The protein resides in the nucleus. It localises to the cytoplasm. The protein localises to the cytosol. In terms of biological role, may act as the scaffold of a protein complex, which sequesters key factors that are required for the G2 to M transition in meristematic tissues. Together with REC2, REC3 and FMT/CLU, contributes to the establishment of the cellular volume devoted to the chloroplast compartment. The protein is Protein REDUCED CHLOROPLAST COVERAGE 3 of Arabidopsis thaliana (Mouse-ear cress).